The chain runs to 334 residues: Formylmethanofuran--tetrahydromethanopterin formyltransferase (334 aa).

The protein belongs to the FTR family. In terms of assembly, homotetramer.

The protein resides in the cytoplasm. It catalyses the reaction N-formylmethanofuran + 5,6,7,8-tetrahydromethanopterin + H(+) = N(5)-formyl-5,6,7,8-tetrahydromethanopterin + methanofuran. It functions in the pathway one-carbon metabolism; formaldehyde degradation; formate from formaldehyde (H(4)MPT route): step 4/5. Functionally, catalyzes the transfer of a formyl group from 5-formyl tetrahydromethanopterin (5-formyl-H(4)MPT) to methanofuran (MFR) to produce formylmethanofuran (formyl-MFR) and tetrahydromethanopterin (H(4)MPT). The chain is Formylmethanofuran--tetrahydromethanopterin formyltransferase from Rhodopirellula baltica (strain DSM 10527 / NCIMB 13988 / SH1).